Consider the following 370-residue polypeptide: 3 beta-hydroxysteroid dehydrogenase/Delta 5--&gt;4-isomerase (370 aa).

Tyrosine 158 serves as the catalytic Proton acceptor. NAD(+) is bound at residue lysine 162.

It belongs to the 3-beta-HSD family. As to quaternary structure, monomer.

It is found in the cytoplasm. It carries out the reaction a 3beta-hydroxy-Delta(5)-steroid + NAD(+) = a 3-oxo-Delta(5)-steroid + NADH + H(+). It catalyses the reaction cholesterol + NAD(+) = cholest-5-en-3-one + NADH + H(+). The enzyme catalyses pregnenolone + NAD(+) = pregn-5-ene-3,20-dione + NADH + H(+). The catalysed reaction is 3beta-hydroxyandrost-5-en-17-one + NAD(+) = androst-5-ene-3,17-dione + NADH + H(+). It carries out the reaction a 3-oxo-Delta(5)-steroid = a 3-oxo-Delta(4)-steroid. It catalyses the reaction cholest-5-en-3-one = cholest-4-en-3-one. The enzyme catalyses pregn-5-ene-3,20-dione = progesterone. The catalysed reaction is androst-5-ene-3,17-dione = androst-4-ene-3,17-dione. The protein operates within lipid metabolism; steroid biosynthesis. Its function is as follows. 3-beta-HSD is a bifunctional enzyme, that catalyzes the oxidation and isomerization of cholesterol, pregnenolone, and dehydroepiandrosterone (DHEA) into cholest-4-en-3-one, progesterone, and androsterone, respectively. This is 3 beta-hydroxysteroid dehydrogenase/Delta 5--&gt;4-isomerase from Mycobacterium tuberculosis (strain CDC 1551 / Oshkosh).